The sequence spans 498 residues: Minor fimbrium subunit Mfa1 (498 aa).

The first 19 residues, methionine 1–serine 19, serve as a signal peptide directing secretion. A lipid anchor (N-palmitoyl cysteine) is attached at cysteine 20. Cysteine 20 carries S-diacylglycerol cysteine lipidation. Positions cysteine 20–arginine 50 are excised as a propeptide. The interval serine 436 to glutamine 476 is disordered.

The protein belongs to the bacteroidetes fimbrillin superfamily. FimA/Mfa1 family. In terms of assembly, structural component of the fimbrial stalk. Minor fimbriae are composed of a structural subunit, such as the 53 kDa fimbrillin, and the accessory subunits Mfa3, Mfa4 and Mfa5. Fimbrium assembly occurs by linear, head-to-tail oligomerization of fimbrial subunits. This is mediated via insertion of a C-terminal beta-strand from one subunit into a groove in the N-terminal domain of the following subunit.

Its subcellular location is the fimbrium. It localises to the cell outer membrane. Structural subunit of the minor fimbriae. These filamentous pili are attached to the cell surface; they mediate biofilm formation, adhesion onto host cells and onto other bacteria that are part of the oral microbiome. They play an important role in invasion of periodontal tissues and are recognized as major virulence factors. Mfa1 orthologs from different strains have highly divergent sequences, and this correlates with pathogenicity. This Porphyromonas gingivalis (Bacteroides gingivalis) protein is Minor fimbrium subunit Mfa1.